Reading from the N-terminus, the 508-residue chain is ATP synthase subunit alpha, chloroplastic (508 aa).

G170–T177 provides a ligand contact to ATP.

It belongs to the ATPase alpha/beta chains family. In terms of assembly, F-type ATPases have 2 components, F(1) - the catalytic core - and F(0) - the membrane proton channel. F(1) has five subunits: alpha(3), beta(3), gamma(1), delta(1), epsilon(1). F(0) has four main subunits: a(1), b(1), b'(1) and c(10-14). The alpha and beta chains form an alternating ring which encloses part of the gamma chain. F(1) is attached to F(0) by a central stalk formed by the gamma and epsilon chains, while a peripheral stalk is formed by the delta, b and b' chains.

It localises to the plastid. Its subcellular location is the chloroplast thylakoid membrane. The enzyme catalyses ATP + H2O + 4 H(+)(in) = ADP + phosphate + 5 H(+)(out). Its function is as follows. F(1)F(0) ATP synthase produces ATP from ADP in the presence of a proton or sodium gradient. F-type ATPases consist of two structural domains, F(1) containing the extramembraneous catalytic core and F(0) containing the membrane proton channel, linked together by a central stalk and a peripheral stalk. During catalysis, ATP synthesis in the catalytic domain of F(1) is coupled via a rotary mechanism of the central stalk subunits to proton translocation. The alpha chain is a regulatory subunit. The sequence is that of ATP synthase subunit alpha, chloroplastic from Chlamydomonas reinhardtii (Chlamydomonas smithii).